The sequence spans 288 residues: Pyridoxal kinase PdxY (288 aa).

Residues Ser-9 and 44-45 (TQ) contribute to the substrate site. The ATP site is built by Asp-111, Glu-148, and Lys-181. Asp-224 contacts substrate.

This sequence belongs to the pyridoxine kinase family. PdxY subfamily. In terms of assembly, homodimer. The cofactor is Mg(2+).

The enzyme catalyses pyridoxal + ATP = pyridoxal 5'-phosphate + ADP + H(+). It participates in cofactor metabolism; pyridoxal 5'-phosphate salvage; pyridoxal 5'-phosphate from pyridoxal: step 1/1. Its function is as follows. Pyridoxal kinase involved in the salvage pathway of pyridoxal 5'-phosphate (PLP). Catalyzes the phosphorylation of pyridoxal to PLP. In Haemophilus influenzae (strain PittEE), this protein is Pyridoxal kinase PdxY.